Here is an 81-residue protein sequence, read N- to C-terminus: Probable small nuclear ribonucleoprotein G (81 aa).

Positions 5–76 (GQPPALKKYM…VVTVEALEPV (72 aa)) constitute a Sm domain.

The protein belongs to the snRNP Sm proteins family.

The protein resides in the nucleus. Functionally, probable common Sm protein, is found in U1 and U2 snRNPs and may be part of the spliceosome. This Medicago sativa (Alfalfa) protein is Probable small nuclear ribonucleoprotein G (C29).